The chain runs to 277 residues: ATP-dependent Clp protease proteolytic subunit, mitochondrial (277 aa).

Residues 1 to 56 constitute a mitochondrion transit peptide; the sequence is MWPGILVGGARVASCRYPALGPRLAAHFPAQRPPQRTLQNGLALQRCLHATATRAL. Serine 153 functions as the Nucleophile in the catalytic mechanism. The active site involves histidine 178. Residue lysine 200 is modified to N6-succinyllysine. Lysine 211 carries the post-translational modification N6-acetyllysine. The tract at residues 246-277 is disordered; that stretch reads VHPPQDGEDEPTLVQKEPVEAAPAAEPVPAST. Low complexity predominate over residues 265–277; the sequence is EAAPAAEPVPAST.

It belongs to the peptidase S14 family. Fourteen CLPP subunits assemble into 2 heptameric rings which stack back to back to give a disk-like structure with a central cavity. Component of the ClpXP complex formed by the assembly of two CLPP heptameric rings with two CLPX hexameric rings, giving rise to a symmetrical structure with two central CLPP rings flanked by a CLPX ring at either end of the complex. Detected in liver (at protein level). Predominantly expressed in skeletal muscle. Intermediate levels in heart, liver and pancreas. Low in brain, placenta, lung and kidney.

The protein resides in the mitochondrion matrix. The enzyme catalyses Hydrolysis of proteins to small peptides in the presence of ATP and magnesium. alpha-casein is the usual test substrate. In the absence of ATP, only oligopeptides shorter than five residues are hydrolyzed (such as succinyl-Leu-Tyr-|-NHMec, and Leu-Tyr-Leu-|-Tyr-Trp, in which cleavage of the -Tyr-|-Leu- and -Tyr-|-Trp bonds also occurs).. Protease component of the ClpXP complex that cleaves peptides and various proteins in an ATP-dependent process. Has low peptidase activity in the absence of CLPX. The ClpXP complex can degrade CSN1S1, CSN2 and CSN3, as well as synthetic peptides (in vitro) and may be responsible for a fairly general and central housekeeping function rather than for the degradation of specific substrates. Cleaves PINK1 in the mitochondrion. The polypeptide is ATP-dependent Clp protease proteolytic subunit, mitochondrial (Homo sapiens (Human)).